The primary structure comprises 64 residues: Large ribosomal subunit protein bL35 (64 aa).

It belongs to the bacterial ribosomal protein bL35 family.

This chain is Large ribosomal subunit protein bL35, found in Desulforudis audaxviator (strain MP104C).